Here is a 111-residue protein sequence, read N- to C-terminus: Ig kappa chain V-III region PC 6684 (111 aa).

A framework-1 region spans residues 1 to 23 (DIVLTQSPASLAVSLGQRATISC). The cysteines at positions 23 and 92 are disulfide-linked. The complementarity-determining-1 stretch occupies residues 24-38 (RASKSVSTSGYSYMH). Residues 39 to 53 (WYQQKPGQPPKLLIY) are framework-2. The interval 54–60 (LASNLES) is complementarity-determining-2. The interval 61 to 92 (GVPARFSGSGSGTDFTLNIHPVEEEDAATYYC) is framework-3. The interval 93-101 (QHSRELPRT) is complementarity-determining-3. The framework-4 stretch occupies residues 102 to 111 (FGGGTKLEIK).

This chain is Ig kappa chain V-III region PC 6684, found in Mus musculus (Mouse).